Here is a 171-residue protein sequence, read N- to C-terminus: UPF0312 protein SE_0264 (171 aa).

This sequence belongs to the UPF0312 family.

The protein is UPF0312 protein SE_0264 of Staphylococcus epidermidis (strain ATCC 12228 / FDA PCI 1200).